Consider the following 158-residue polypeptide: Sorbin and SH3 domain-containing protein 2 (158 aa).

The 46-residue stretch at 1–46 (MRAATPLQTVDRPKDWYKTMFKQIHMVHKPDDDTDMYNTPYTYNAG) folds into the SoHo domain. Residues 28-158 (HKPDDDTDMY…TKPQAGRRKV (131 aa)) form a disordered region. Residues 50–66 (SPYSAQSHPAAKTQTYR) are compositionally biased toward polar residues. The span at 71 to 81 (SHSDNGTDAFK) shows a compositional bias: basic and acidic residues. Ser-73 is subject to Phosphoserine. A compositionally biased stretch (pro residues) spans 86-99 (PVPPPHVPPPVPPL). The segment covering 100-136 (RPRDRSSTEKHDWDPPDRKVDTRKFRSEPRSIFEYEP) has biased composition (basic and acidic residues). Ala-153 is subject to Alanine amide.

Interacts with ABL1/c-Abl, ABL2/v-Abl/Arg, ACTN, AKT1, CBL, PALLD and PAK1. Interacts with ABL, CBL, DNM1, DNM2, FLOT1, AFDN, PTK2B/PYK2, SAPAP, SPTAN1, SYNJ1, SYNJ2, VCL/vinculin, and WASF. Interacts with PTPN12 and WASF1 via its SH3 domains; this interaction may mediate the partial PTPN12 and WASF1 translocation to focal adhesion sites. Ubiquitinated by CBL. Post-translationally, dephosphorylated by PTPN12. As to expression, expressed in duodenum.

The protein localises to the cytoplasm. Its subcellular location is the perinuclear region. The protein resides in the apical cell membrane. It is found in the cell junction. It localises to the focal adhesion. The protein localises to the cell projection. Its subcellular location is the lamellipodium. Adapter protein that plays a role in the assembling of signaling complexes, being a link between ABL kinases and actin cytoskeleton. Can form complex with ABL1 and CBL, thus promoting ubiquitination and degradation of ABL1 or with AKT1 and PAK1, thus mediating AKT1-mediated activation of PAK1. May play a role in the regulation of pancreatic cell adhesion, possibly by acting on WASF1 phosphorylation, enhancing phosphorylation by ABL1, as well as dephosphorylation by PTPN12. Increases water and sodium absorption in the intestine and gall-bladder. This chain is Sorbin and SH3 domain-containing protein 2 (SORBS2), found in Sus scrofa (Pig).